Consider the following 235-residue polypeptide: 7-carboxy-7-deazaguanine synthase (235 aa).

Substrate-binding positions include 27–29 and Arg42; that span reads LQG. The region spanning 33-235 is the Radical SAM core domain; sequence FSGQPSVFVR…VQVHKILKIA (203 aa). Positions 46, 50, and 53 each coordinate [4Fe-4S] cluster. Residue Thr55 participates in Mg(2+) binding. Thr87 is a substrate binding site. S-adenosyl-L-methionine is bound by residues Gly89 and 133 to 135; that span reads SPK.

The protein belongs to the radical SAM superfamily. 7-carboxy-7-deazaguanine synthase family. In terms of assembly, homodimer. The cofactor is [4Fe-4S] cluster. S-adenosyl-L-methionine serves as cofactor. Requires Mg(2+) as cofactor.

The enzyme catalyses 6-carboxy-5,6,7,8-tetrahydropterin + H(+) = 7-carboxy-7-deazaguanine + NH4(+). It participates in purine metabolism; 7-cyano-7-deazaguanine biosynthesis. Catalyzes the complex heterocyclic radical-mediated conversion of 6-carboxy-5,6,7,8-tetrahydropterin (CPH4) to 7-carboxy-7-deazaguanine (CDG), a step common to the biosynthetic pathways of all 7-deazapurine-containing compounds. The protein is 7-carboxy-7-deazaguanine synthase of Rhodospirillum rubrum (strain ATCC 11170 / ATH 1.1.1 / DSM 467 / LMG 4362 / NCIMB 8255 / S1).